The sequence spans 544 residues: Sphingosine-1-phosphate lyase (544 aa).

Residues 1-29 (MDSFSYSSMKSMLIQARGSLNSRLSEFEP) are Lumenal-facing. Residues 30-50 (LVLLLVPLVSLFLAQIIGSVF) form a helical; Signal-anchor for type III membrane protein membrane-spanning segment. At 51 to 544 (GVVHEKGLKA…LLVSFMDSQY (494 aa)) the chain is on the cytoplasmic side. Lys-349 bears the N6-(pyridoxal phosphate)lysine mark.

The protein belongs to the group II decarboxylase family. Sphingosine-1-phosphate lyase subfamily. It depends on pyridoxal 5'-phosphate as a cofactor. Expressed in the peripheral parts of leaves and the bases of trichomes.

The protein localises to the endoplasmic reticulum membrane. It catalyses the reaction sphinganine 1-phosphate = hexadecanal + phosphoethanolamine. It participates in lipid metabolism; sphingolipid metabolism. Functionally, cleaves phosphorylated sphingoid bases (PSBs), such as sphingosine-1-phosphate, into fatty aldehydes and phosphoethanolamine. May play a minor role in maintenance of sphingolipid metabolism during normal plant development and growth, but be required for maintaining sphingoid long chain bases (LCB) and their phosphorylated derivatives (LCB-P) levels when sphingolipid metabolism is perturbed. May play a role in dehydration stress. This is Sphingosine-1-phosphate lyase (DPL1) from Arabidopsis thaliana (Mouse-ear cress).